The sequence spans 323 residues: tRNA dimethylallyltransferase (323 aa).

Position 12-19 (12-19 (GPTAAGKT)) interacts with ATP. 14–19 (TAAGKT) is a binding site for substrate. Interaction with substrate tRNA stretches follow at residues 37-40 (DSAL) and 161-165 (QRLIR).

It belongs to the IPP transferase family. As to quaternary structure, monomer. Mg(2+) is required as a cofactor.

It carries out the reaction adenosine(37) in tRNA + dimethylallyl diphosphate = N(6)-dimethylallyladenosine(37) in tRNA + diphosphate. Functionally, catalyzes the transfer of a dimethylallyl group onto the adenine at position 37 in tRNAs that read codons beginning with uridine, leading to the formation of N6-(dimethylallyl)adenosine (i(6)A). This Pseudomonas putida (strain ATCC 47054 / DSM 6125 / CFBP 8728 / NCIMB 11950 / KT2440) protein is tRNA dimethylallyltransferase.